The chain runs to 404 residues: Argininosuccinate synthase (404 aa).

Residues 11–19 and alanine 38 contribute to the ATP site; that span reads AYSGGLDTS. L-citrulline is bound by residues tyrosine 91 and serine 96. Glycine 121 is a binding site for ATP. The L-aspartate site is built by threonine 123, asparagine 127, and aspartate 128. Asparagine 127 contacts L-citrulline. Residues arginine 131, serine 182, serine 191, glutamate 267, and tyrosine 279 each contribute to the L-citrulline site.

The protein belongs to the argininosuccinate synthase family. Type 1 subfamily. Homotetramer.

Its subcellular location is the cytoplasm. It carries out the reaction L-citrulline + L-aspartate + ATP = 2-(N(omega)-L-arginino)succinate + AMP + diphosphate + H(+). Its pathway is amino-acid biosynthesis; L-arginine biosynthesis; L-arginine from L-ornithine and carbamoyl phosphate: step 2/3. The sequence is that of Argininosuccinate synthase from Paramagnetospirillum magneticum (strain ATCC 700264 / AMB-1) (Magnetospirillum magneticum).